Consider the following 847-residue polypeptide: B-cell receptor CD22 (847 aa).

The first 19 residues, 1–19 (MHLLGPWLLLLVLEYLAFS), serve as a signal peptide directing secretion. The region spanning 20 to 138 (DSSKWVFEHP…MERIHLNVSE (119 aa)) is the Ig-like V-type domain. Residues 20–687 (DSSKWVFEHP…YYSPETIGRR (668 aa)) lie on the Extracellular side of the membrane. Intrachain disulfides connect Cys39–Cys167, Cys44–Cys102, and Cys161–Cys219. Residues Asn67, Asn101, and Asn112 are each glycosylated (N-linked (GlcNAc...) asparagine). Arg120 serves as a coordination point for N-acetylneuraminate. Asn135, Asn164, and Asn231 each carry an N-linked (GlcNAc...) asparagine glycan. 6 Ig-like C2-type domains span residues 143–235 (PHIQ…DTVQ), 242–326 (PKLE…VFLQ), 331–416 (PEPS…LDVQ), 419–500 (PKKV…VALN), 505–582 (PRDV…QTAS), and 593–676 (PRRL…STLT). Disulfide bonds link Cys265–Cys309, Cys353–Cys396, Cys442–Cys484, and Cys529–Cys571. 3 N-linked (GlcNAc...) asparagine glycosylation sites follow: Asn363, Asn445, and Asn479. Asn574 and Asn634 each carry an N-linked (GlcNAc...) asparagine glycan. The cysteines at positions 616 and 659 are disulfide-linked. A helical transmembrane segment spans residues 688–706 (VAVGLGSCLAILILAICGL). Residues 707–847 (KLQRRWKRTQ…ENVDYVILKH (141 aa)) lie on the Cytoplasmic side of the membrane. Phosphoserine occurs at positions 725, 726, and 729. Short sequence motifs (ITIM motif) lie at residues 760–765 (ISYTTL) and 794–799 (VTYSAL). The residue at position 762 (Tyr762) is a Phosphotyrosine. Residues Tyr807, Tyr822, and Tyr842 each carry the phosphotyrosine modification. 2 consecutive short sequence motifs (ITIM motif) follow at residues 820 to 825 (IHYSEL) and 840 to 845 (VDYVIL).

The protein belongs to the immunoglobulin superfamily. SIGLEC (sialic acid binding Ig-like lectin) family. In terms of assembly, predominantly monomer of isoform CD22-beta. Also found as heterodimer of isoform CD22-beta and a shorter isoform. Interacts with PTPN6/SHP-1, LYN, SYK, PIK3R1/PIK3R2 and PLCG1 upon phosphorylation. Interacts with GRB2, INPP5D and SHC1 upon phosphorylation. May form a complex with INPP5D/SHIP, GRB2 and SHC1. Post-translationally, phosphorylation of Tyr-762, Tyr-807 and Tyr-822 are involved in binding to SYK, GRB2 and SYK, respectively. Phosphorylation of Tyr-842 is involved in binding to SYK, PLCG2 and PIK3R1/PIK3R2. In terms of processing, phosphorylated on tyrosine residues by LYN. As to expression, B-lymphocytes.

Its subcellular location is the cell membrane. Most highly expressed siglec (sialic acid-binding immunoglobulin-like lectin) on B-cells that plays a role in various aspects of B-cell biology including differentiation, antigen presentation, and trafficking to bone marrow. Binds to alpha 2,6-linked sialic acid residues of surface molecules such as CD22 itself, CD45 and IgM in a cis configuration. Can also bind to ligands on other cells as an adhesion molecule in a trans configuration. Acts as an inhibitory coreceptor on the surface of B-cells and inhibits B-cell receptor induced signaling, characterized by inhibition of the calcium mobilization and cellular activation. Mechanistically, the immunoreceptor tyrosine-based inhibitory motif domain is phosphorylated by the Src kinase LYN, which in turn leads to the recruitment of the protein tyrosine phosphatase 1/PTPN6, leading to the negative regulation of BCR signaling. If this negative signaling from is of sufficient strength, apoptosis of the B-cell can be induced. This is B-cell receptor CD22 from Homo sapiens (Human).